Reading from the N-terminus, the 47-residue chain is Protein PsbN (47 aa).

Residues 7–29 (VAISISCLLISFTGYALYTAFGN) form a helical membrane-spanning segment.

The protein belongs to the PsbN family.

It is found in the plastid membrane. Its function is as follows. May play a role in photosystem I and II biogenesis. The sequence is that of Protein PsbN from Aneura mirabilis (Parasitic liverwort).